Consider the following 157-residue polypeptide: MKLHELSDNPGATKKRMRIGRGPGSGKGKMGGRGIKGQKSRSGVAINGYEGGQMPLYQRLPKRGFNKPNRKAFAVVNLGLIQKFVEAGKLDGAAAITEDALVASGLVRRKLDGIRVLAKGDFNAKLNIEVTGASKSAVEAVEKAGGSLKVTNAAAAE.

A disordered region spans residues 1-40; sequence MKLHELSDNPGATKKRMRIGRGPGSGKGKMGGRGIKGQKS. A compositionally biased stretch (gly residues) spans 21–35; that stretch reads RGPGSGKGKMGGRGI.

Belongs to the universal ribosomal protein uL15 family. Part of the 50S ribosomal subunit.

In terms of biological role, binds to the 23S rRNA. The polypeptide is Large ribosomal subunit protein uL15 (Ruegeria pomeroyi (strain ATCC 700808 / DSM 15171 / DSS-3) (Silicibacter pomeroyi)).